A 139-amino-acid chain; its full sequence is Probable disulfide formation protein C 1 (139 aa).

Residues 8 to 27 (EYALFTAWGASFIATLGSLY) form a helical membrane-spanning segment. A disulfide bridge connects residues Cys37 and Cys40. The next 2 helical transmembrane spans lie at 42–61 (YQRIFMYPFVLWLGIAVVKK) and 68–85 (YSLPIASIGACISLYHYA). Residues Cys99 and Cys104 are joined by a disulfide bond. A helical transmembrane segment spans residues 113-135 (GFVTIPFLALIGFITIAVCSFIV).

Belongs to the DsbB family. BdbC subfamily.

It is found in the cell membrane. Required for disulfide bond formation in some proteins. The polypeptide is Probable disulfide formation protein C 1 (bdbC1) (Bacillus cereus (strain ATCC 10987 / NRS 248)).